We begin with the raw amino-acid sequence, 399 residues long: Secreted RxLR effector protein 36 (399 aa).

Residues Met-1–Ala-21 form the signal peptide. A RxLR-dEER motif is present at residues Arg-50–Arg-71. N-linked (GlcNAc...) asparagine glycosylation is present at Asn-75. The tract at residues Ile-126–Asp-145 is disordered.

It belongs to the RxLR effector family.

It localises to the secreted. It is found in the host nucleus. Its function is as follows. Secreted effector that completely suppresses the host cell death induced by cell death-inducing proteins. In Plasmopara viticola (Downy mildew of grapevine), this protein is Secreted RxLR effector protein 36.